The chain runs to 641 residues: Epsin-2 (641 aa).

A 1,2-diacyl-sn-glycero-3-phospho-(1D-myo-inositol-4,5-bisphosphate) is bound by residues Arg-8, Lys-11, Arg-25, Asn-30, Arg-63, and His-73. Residues 12-144 (NIVNNYSEAE…KDEERLKAER (133 aa)) form the ENTH domain. Phosphoserine is present on residues Arg-153 and Gln-156. Polar residues predominate over residues 163–181 (SNQITFGRGSSQPNLSTSH). Disordered stretches follow at residues 163-214 (SNQI…GAPL) and 255-275 (RATS…TSGE). Arg-170 is subject to Omega-N-methylarginine. Phosphoserine is present on residues Ser-173, Ser-192, and Ser-195. Polar residues predominate over residues 259 to 273 (PRVSSELEQARPQTS). UIM domains lie at 275–294 (EEEL…AEQE) and 300–319 (GDDL…TVKI). Positions 340–425 (ALPSSGPAAQ…QPASSAGKRA (86 aa)) are disordered. 6 tandem repeats follow at residues 352 to 354 (EPW), 364 to 366 (NPW), 377 to 379 (DPW), 391 to 393 (DPW), 409 to 411 (DPW), and 427 to 429 (DAW). Residues 352-639 (EPWGPSASTN…AQATGTTNPF (288 aa)) are 6 X 3 AA repeats of [DE]-P-W. Over residues 408 to 421 (SDPWAASQQPASSA) the composition is skewed to low complexity. The tract at residues 470-512 (TAESVTSLPSQNNGTTSPDPFESQPLTVASSKPSSARKTPESF) is disordered. A compositionally biased stretch (polar residues) spans 472–506 (ESVTSLPSQNNGTTSPDPFESQPLTVASSKPSSAR). Residue Ser-486 is modified to Phosphoserine. Thr-508 is subject to Phosphothreonine. Repeat copies occupy residues 537–539 (NPF) and 552–554 (NPF). A 3 X 3 AA repeats of N-P-F region spans residues 537 to 639 (NPFLAPGAPA…AQATGTTNPF (103 aa)). At Ser-570 the chain carries Phosphoserine. Residues 637–639 (NPF) form repeat 3.

The protein belongs to the epsin family. Binds EPS15. Interacts with ITSN1. Binds AP-2 and clathrin. Interacts with UBQLN2. Ubiquitinated. Highest expression is found in brain. Detected at lower levels in lung and liver.

The protein localises to the cytoplasm. Its subcellular location is the cytoplasmic vesicle. It localises to the clathrin-coated vesicle. Functionally, plays a role in the formation of clathrin-coated invaginations and endocytosis. This is Epsin-2 (EPN2) from Homo sapiens (Human).